The primary structure comprises 1228 residues: DNA-directed RNA polymerase subunit beta'' (1228 aa).

Residues Cys-222, Cys-296, Cys-303, and Cys-306 each coordinate Zn(2+).

The protein belongs to the RNA polymerase beta' chain family. RpoC2 subfamily. As to quaternary structure, in plastids the minimal PEP RNA polymerase catalytic core is composed of four subunits: alpha, beta, beta', and beta''. When a (nuclear-encoded) sigma factor is associated with the core the holoenzyme is formed, which can initiate transcription. Zn(2+) is required as a cofactor.

It is found in the plastid. The protein resides in the chloroplast. The enzyme catalyses RNA(n) + a ribonucleoside 5'-triphosphate = RNA(n+1) + diphosphate. Functionally, DNA-dependent RNA polymerase catalyzes the transcription of DNA into RNA using the four ribonucleoside triphosphates as substrates. The sequence is that of DNA-directed RNA polymerase subunit beta'' from Gracilaria tenuistipitata var. liui (Red alga).